The sequence spans 91 residues: Acylphosphatase (91 aa).

In terms of domain architecture, Acylphosphatase-like spans R3 to Q90. Residues R18 and N36 contribute to the active site.

The protein belongs to the acylphosphatase family.

It carries out the reaction an acyl phosphate + H2O = a carboxylate + phosphate + H(+). This Shewanella amazonensis (strain ATCC BAA-1098 / SB2B) protein is Acylphosphatase (acyP).